We begin with the raw amino-acid sequence, 378 residues long: Mating-type protein MAT-1 (378 aa).

Positions 60-117 (KAKKALNAFVGFRCYYIAIPAFKPWPMKKLSNLISLLWEGDPNKSLWSLMAKAWSNIR) form a DNA-binding region, alpha box. A disordered region spans residues 235-256 (SQVDQARVAARNRRRAKRQSAR). Residues 244–253 (ARNRRRAKRQ) are compositionally biased toward basic residues.

Belongs to the MATALPHA1 family.

The protein localises to the nucleus. In terms of biological role, mating type proteins are sequence specific DNA-binding proteins that act as master switches in fungal differentiation by controlling gene expression in a cell type-specific fashion. Transcriptional activator that induces the transcription of alpha-specific genes. This is Mating-type protein MAT-1 (MAT1) from Cochliobolus ellisii (Curvularia ellisii).